The following is a 214-amino-acid chain: Nigrelysin (214 aa).

The first 21 residues, Met-1 to Ala-21, serve as a signal peptide directing secretion. The propeptide occupies Leu-22–Arg-35. The segment at Glu-38–Ala-47 is plays an important role in the hemolytic activity. The N-terminal region stretch occupies residues Gly-46–Ser-65. 7 residues coordinate phosphocholine: Ser-89, Val-122, Ser-140, Pro-142, Tyr-168, Tyr-172, and Tyr-173. A trp-rich region, which is important for the binding to lipid membrane region spans residues Ser-140 to Lys-155. The short motif at Lys-179–Asp-181 is the Cell attachment site, crucial for protein stability element.

Belongs to the actinoporin family. Sea anemone subfamily. As to quaternary structure, octamer or nonamer in membranes. Monomer in the soluble state.

It localises to the secreted. Its subcellular location is the nematocyst. It is found in the target cell membrane. Its function is as follows. Pore-forming protein that forms cation-selective hydrophilic pores in cell membranes and causes cytolysis. Pore formation is a multi-step process that involves specific recognition of membrane sphingomyelin (but neither cholesterol nor phosphatidylcholine) using aromatic rich region and adjacent phosphocholine (POC) binding site, firm binding to the membrane (mainly driven by hydrophobic interactions) accompanied by the transfer of the N-terminal region to the lipid-water interface and finally pore formation after oligomerization of monomers. This protein shows potent hemolytic activity (EC(50)=0.09 nM), as well as potent cytotoxic activity on nucleated cells (L1210 cells). The cytotoxic process starts with cellular swelling that is time and dose dependent and occurs up to a critical volume, probably due to influx of water via pores opened by this actinoporin. The second phase consists of the final loss of membrane integrity that leads to cytolysis. This is Nigrelysin from Anthopleura nigrescens (Sea anemone).